Reading from the N-terminus, the 300-residue chain is Quinolinate synthase (300 aa).

Residues histidine 23 and serine 40 each coordinate iminosuccinate. Cysteine 85 contributes to the [4Fe-4S] cluster binding site. Iminosuccinate is bound by residues 111-113 and serine 128; that span reads YIN. Cysteine 171 lines the [4Fe-4S] cluster pocket. Residues 198 to 200 and threonine 215 contribute to the iminosuccinate site; that span reads HPE. [4Fe-4S] cluster is bound at residue cysteine 258.

This sequence belongs to the quinolinate synthase family. Type 2 subfamily. It depends on [4Fe-4S] cluster as a cofactor.

It localises to the cytoplasm. It carries out the reaction iminosuccinate + dihydroxyacetone phosphate = quinolinate + phosphate + 2 H2O + H(+). It participates in cofactor biosynthesis; NAD(+) biosynthesis; quinolinate from iminoaspartate: step 1/1. Functionally, catalyzes the condensation of iminoaspartate with dihydroxyacetone phosphate to form quinolinate. The sequence is that of Quinolinate synthase from Clostridium novyi (strain NT).